The sequence spans 481 residues: Pyruvate kinase (481 aa).

Arginine 36 lines the substrate pocket. Residues asparagine 38, serine 40, and aspartate 70 each contribute to the K(+) site. ATP is bound at residue 38 to 41 (NFSH). ATP is bound by residues arginine 77 and lysine 160. A Mg(2+)-binding site is contributed by glutamate 225. Residues glycine 251, aspartate 252, and threonine 284 each coordinate substrate. Aspartate 252 contacts Mg(2+).

Belongs to the pyruvate kinase family. In terms of assembly, homotetramer. It depends on Mg(2+) as a cofactor. Requires K(+) as cofactor.

The catalysed reaction is pyruvate + ATP = phosphoenolpyruvate + ADP + H(+). It participates in carbohydrate degradation; glycolysis; pyruvate from D-glyceraldehyde 3-phosphate: step 5/5. With respect to regulation, allosterically activated by AMP and by several sugar phosphates. Belongs to type II PK. This Buchnera aphidicola subsp. Schizaphis graminum (strain Sg) protein is Pyruvate kinase (pykA).